We begin with the raw amino-acid sequence, 564 residues long: Probable metalloprotease ARX1 (564 aa).

Belongs to the peptidase M24 family. Component of the nucleoplasmic and cytoplasmic pre-60S ribosomal particles.

The protein localises to the cytoplasm. It localises to the nucleus. Functionally, probable metalloprotease involved in proper assembly of pre-ribosomal particles during the biogenesis of the 60S ribosomal subunit. Accompanies the pre-60S particles to the cytoplasm. The protein is Probable metalloprotease ARX1 (ARX1) of Candida albicans (strain SC5314 / ATCC MYA-2876) (Yeast).